Here is a 200-residue protein sequence, read N- to C-terminus: RNA-binding protein with multiple splicing 2 (200 aa).

The RRM domain occupies 22-99; sequence RTLFVSGLPV…QTLRLEFAKA (78 aa). The segment at 32 to 42 is important for homodimerization; it reads DIKPRELYLLF.

Homodimer. Expressed in developing heart.

It is found in the cytoplasm. It localises to the nucleus. The protein resides in the stress granule. RNA-binding protein involved in the regulation of smooth muscle cell differentiation and proliferation in the gastrointestinal system. Binds NOG mRNA, the major inhibitor of the bone morphogenetic protein (BMP) pathway. Mediates an increase of NOG mRNA levels, thereby contributing to the negative regulation of BMP signaling pathway and promoting reversible dedifferentiation and proliferation of smooth muscle cells. Acts as a pre-mRNA alternative splicing regulator. Mediates ACTN1 and FLNB alternative splicing. Likely binds to mRNA tandem CAC trinucleotide or CA dinucleotide motifs. This is RNA-binding protein with multiple splicing 2 from Gallus gallus (Chicken).